We begin with the raw amino-acid sequence, 746 residues long: 4-hydroxy-3-methylbut-2-en-1-yl diphosphate synthase (flavodoxin) (746 aa).

Cysteine 653, cysteine 656, cysteine 687, and glutamate 694 together coordinate [4Fe-4S] cluster.

Belongs to the IspG family. [4Fe-4S] cluster is required as a cofactor.

The catalysed reaction is (2E)-4-hydroxy-3-methylbut-2-enyl diphosphate + oxidized [flavodoxin] + H2O + 2 H(+) = 2-C-methyl-D-erythritol 2,4-cyclic diphosphate + reduced [flavodoxin]. It participates in isoprenoid biosynthesis; isopentenyl diphosphate biosynthesis via DXP pathway; isopentenyl diphosphate from 1-deoxy-D-xylulose 5-phosphate: step 5/6. Functionally, converts 2C-methyl-D-erythritol 2,4-cyclodiphosphate (ME-2,4cPP) into 1-hydroxy-2-methyl-2-(E)-butenyl 4-diphosphate. The chain is 4-hydroxy-3-methylbut-2-en-1-yl diphosphate synthase (flavodoxin) from Chlorobaculum tepidum (strain ATCC 49652 / DSM 12025 / NBRC 103806 / TLS) (Chlorobium tepidum).